Consider the following 134-residue polypeptide: Small ribosomal subunit protein uS11 (134 aa).

The protein belongs to the universal ribosomal protein uS11 family. Part of the 30S ribosomal subunit. Interacts with proteins S7 and S18. Binds to IF-3.

In terms of biological role, located on the platform of the 30S subunit, it bridges several disparate RNA helices of the 16S rRNA. Forms part of the Shine-Dalgarno cleft in the 70S ribosome. In Corynebacterium diphtheriae (strain ATCC 700971 / NCTC 13129 / Biotype gravis), this protein is Small ribosomal subunit protein uS11.